We begin with the raw amino-acid sequence, 224 residues long: Late embryogenesis abundant protein, group 3 (224 aa).

Disordered regions lie at residues 1-169 (MASN…KDKT) and 193-224 (NTLG…TRNH). Basic and acidic residues predominate over residues 13-23 (GETKARNEEKT). Repeat copies occupy residues 26–36 (VMGATKDKAGQ), 37–47 (TTEATKQKAGE), 48–58 (TTEATKQKAAE), 59–69 (TTEAAKQKASE), and 70–80 (TAEATKQKAAE). The 12 X 11 AA tandem repeats stretch occupies residues 26–153 (VMGATKDKAG…TEAAKQKASE (128 aa)). 3 stretches are compositionally biased toward basic and acidic residues: residues 41 to 85 (TKQK…KDKT), 92 to 109 (AKEK…RAAQ), and 120 to 151 (EKTE…KQKA). One copy of the 6; truncated repeat lies at 81–87 (AKDKTAQ). 5 repeat units span residues 88 to 98 (TAQAAKEKTYE), 99 to 109 (TAQSAKERAAQ), 121 to 131 (KTEAAKQKAAE), 132 to 142 (TTEAARQKAAE), and 143 to 153 (ATEAAKQKASE). The span at 200-224 (DNTITTKDNTTGATTKDTTTTTRNH) shows a compositional bias: low complexity.

This sequence belongs to the LEA type 4 family.

This is Late embryogenesis abundant protein, group 3 from Triticum aestivum (Wheat).